Consider the following 59-residue polypeptide: uncharacterized protein (59 aa).

This is an uncharacterized protein from Caenorhabditis elegans.